The primary structure comprises 117 residues: Large ribosomal subunit protein bL19 (117 aa).

Belongs to the bacterial ribosomal protein bL19 family.

This protein is located at the 30S-50S ribosomal subunit interface and may play a role in the structure and function of the aminoacyl-tRNA binding site. The polypeptide is Large ribosomal subunit protein bL19 (Shewanella baltica (strain OS155 / ATCC BAA-1091)).